Reading from the N-terminus, the 273-residue chain is NADPH-dependent 7-cyano-7-deazaguanine reductase (273 aa).

81-83 (VES) contacts substrate. Residue 83-84 (SK) participates in NADPH binding. The Thioimide intermediate role is filled by C179. The active-site Proton donor is the D186. Residue 218-219 (AE) coordinates substrate. Position 247 to 248 (247 to 248 (RG)) interacts with NADPH.

This sequence belongs to the GTP cyclohydrolase I family. QueF type 2 subfamily. Homodimer.

The protein localises to the cytoplasm. It carries out the reaction 7-aminomethyl-7-carbaguanine + 2 NADP(+) = 7-cyano-7-deazaguanine + 2 NADPH + 3 H(+). It participates in tRNA modification; tRNA-queuosine biosynthesis. Its function is as follows. Catalyzes the NADPH-dependent reduction of 7-cyano-7-deazaguanine (preQ0) to 7-aminomethyl-7-deazaguanine (preQ1). The polypeptide is NADPH-dependent 7-cyano-7-deazaguanine reductase (Rickettsia massiliae (strain Mtu5)).